A 444-amino-acid polypeptide reads, in one-letter code: UPF0053 protein YhdP (444 aa).

One can recognise a CNNM transmembrane domain in the interval 1–201 (MDIVNLILVA…YKSGEINQSE (201 aa)). 3 helical membrane-spanning segments follow: residues 7–27 (ILVA…FAII), 61–81 (ACQL…ESTI), and 101–121 (VISF…VGEL). 2 CBS domains span residues 220-282 (MIPR…SVDS) and 284-344 (ISQF…IRDE).

Belongs to the UPF0053 family.

The protein localises to the cell membrane. The sequence is that of UPF0053 protein YhdP (yhdP) from Bacillus subtilis (strain 168).